We begin with the raw amino-acid sequence, 459 residues long: MSFRFNEAVFGDNSFNERIREKLSTALNSPSKKKLDILKSGIKVQKVDFPTIPQLEILDLDIITQPKSLAKGICKISCKDAMLRIQTVIESNLLLINEQDTPSFTMPQLINNGSFTIPITMTFSSIELEAITNIFVKNPGIGISFNDVDLDFKFDCSVKILQSTIERRLKESMHVVFKDVLPSLIFNTSQNWFTNRGESTSTIPGKREHHHQQTTMSRNVILDGSDFQELSPINMLRLSSIVSSRSTLSLHSTVMNSLSAIPGCLERQNLYRFISRMPSLNNYYSSQSFPQPKSSTVSSKQLVKPFYCSHNLLPKTVLDSSQYDLATITKIQSRLFDRSNSNDDNAKPRRRKIKCKKTRTPSNLQSQGEQAVDDSTAIETVTSTPVQTPIPELEEQSPPYLKTTVSIRDKYVIPEKISLNLDSKKDTSKKKPFYFIGLNSQEPSNNWKWGMEDSPPPYH.

The region spanning 1 to 190 (MSFRFNEAVF…LPSLIFNTSQ (190 aa)) is the SMP-LTD domain. Over residues 338 to 347 (RSNSNDDNAK) the composition is skewed to basic and acidic residues. The segment at 338–375 (RSNSNDDNAKPRRRKIKCKKTRTPSNLQSQGEQAVDDS) is disordered. Over residues 348 to 359 (PRRRKIKCKKTR) the composition is skewed to basic residues.

The protein belongs to the MDM34 family. Component of the ER-mitochondria encounter structure (ERMES) or MDM complex, composed of MMM1, MDM10, MDM12 and MDM34. Post-translationally, ubiquitinated by a SCF (SKP1-CUL1-F-box protein) E3 ubiquitin-protein ligase complex containing the F-box protein MDM30. Ubiquitination is important for mitochondrial integrity.

Its subcellular location is the mitochondrion outer membrane. Component of the ERMES/MDM complex, which serves as a molecular tether to connect the endoplasmic reticulum (ER) and mitochondria. Components of this complex are involved in the control of mitochondrial shape and protein biogenesis, and function in nonvesicular lipid trafficking between the ER and mitochondria. MDM34 is required for the interaction of the ER-resident membrane protein MMM1 and the outer mitochondrial membrane-resident beta-barrel protein MDM10. The sequence is that of Mitochondrial distribution and morphology protein 34 from Saccharomyces cerevisiae (strain YJM789) (Baker's yeast).